The sequence spans 608 residues: uncharacterized protein (608 aa).

Residues 1-21 (MHTNSPLRADNQDLETQPLLR) form a disordered region. Residue Thr-24 is modified to Phosphothreonine. A Phosphoserine modification is found at Ser-27. The chain crosses the membrane as a helical span at residues 55 to 75 (IIYLLGIVLLSFFGVSIVQYI). Residues Asn-115, Asn-141, Asn-169, Asn-407, Asn-425, Asn-449, Asn-453, Asn-527, and Asn-580 are each glycosylated (N-linked (GlcNAc...) asparagine).

Its subcellular location is the membrane. This is an uncharacterized protein from Saccharomyces cerevisiae (strain ATCC 204508 / S288c) (Baker's yeast).